A 494-amino-acid chain; its full sequence is Lysine--tRNA ligase (494 aa).

The Mg(2+) site is built by Glu407 and Glu414.

It belongs to the class-II aminoacyl-tRNA synthetase family. In terms of assembly, homodimer. Mg(2+) serves as cofactor.

It localises to the cytoplasm. The enzyme catalyses tRNA(Lys) + L-lysine + ATP = L-lysyl-tRNA(Lys) + AMP + diphosphate. The polypeptide is Lysine--tRNA ligase (Lactococcus lactis subsp. lactis (strain IL1403) (Streptococcus lactis)).